Consider the following 674-residue polypeptide: DNA ligase (674 aa).

NAD(+)-binding positions include 34-38 (DSEYD), 83-84 (SL), and Glu-114. Catalysis depends on Lys-116, which acts as the N6-AMP-lysine intermediate. Arg-137, Glu-174, Lys-290, and Lys-314 together coordinate NAD(+). Residues Cys-405, Cys-408, Cys-424, and Cys-429 each coordinate Zn(2+). One can recognise a BRCT domain in the interval 587-674 (QSGTQFDGKM…KLSLIENTKF (88 aa)).

This sequence belongs to the NAD-dependent DNA ligase family. LigA subfamily. Requires Mg(2+) as cofactor. The cofactor is Mn(2+).

The catalysed reaction is NAD(+) + (deoxyribonucleotide)n-3'-hydroxyl + 5'-phospho-(deoxyribonucleotide)m = (deoxyribonucleotide)n+m + AMP + beta-nicotinamide D-nucleotide.. Functionally, DNA ligase that catalyzes the formation of phosphodiester linkages between 5'-phosphoryl and 3'-hydroxyl groups in double-stranded DNA using NAD as a coenzyme and as the energy source for the reaction. It is essential for DNA replication and repair of damaged DNA. The chain is DNA ligase from Endomicrobium trichonymphae.